A 479-amino-acid chain; its full sequence is Chromosomal replication initiator protein DnaA (479 aa).

The domain I, interacts with DnaA modulators stretch occupies residues 1 to 71; the sequence is MNLTQIWKAT…RNALARVVGY (71 aa). Residues 71–138 form a domain II region; it reads YPVQVQVLIA…LDLASAMRSG (68 aa). A compositionally biased stretch (polar residues) spans 86–99; that stretch reads TEPSPSLTLSNGSR. The disordered stretch occupies residues 86-106; that stretch reads TEPSPSLTLSNGSRLMSDPEP. A domain III, AAA+ region region spans residues 139–355; the sequence is MLNPRYTFSS…GSLNRVAAYA (217 aa). ATP contacts are provided by Gly-183, Gly-185, Lys-186, and Thr-187. Positions 356–479 are domain IV, binds dsDNA; the sequence is ELNRAPITIE…IRERIQMLRG (124 aa).

This sequence belongs to the DnaA family. Oligomerizes as a right-handed, spiral filament on DNA at oriC.

The protein localises to the cytoplasm. In terms of biological role, plays an essential role in the initiation and regulation of chromosomal replication. ATP-DnaA binds to the origin of replication (oriC) to initiate formation of the DNA replication initiation complex once per cell cycle. Binds the DnaA box (a 9 base pair repeat at the origin) and separates the double-stranded (ds)DNA. Forms a right-handed helical filament on oriC DNA; dsDNA binds to the exterior of the filament while single-stranded (ss)DNA is stabiized in the filament's interior. The ATP-DnaA-oriC complex binds and stabilizes one strand of the AT-rich DNA unwinding element (DUE), permitting loading of DNA polymerase. After initiation quickly degrades to an ADP-DnaA complex that is not apt for DNA replication. Binds acidic phospholipids. This Chloroflexus aurantiacus (strain ATCC 29366 / DSM 635 / J-10-fl) protein is Chromosomal replication initiator protein DnaA.